Reading from the N-terminus, the 519-residue chain is Zinc finger protein 692 (519 aa).

The segment at Gly-123–Ile-314 is disordered. Residues Arg-145–Gln-155 are compositionally biased toward polar residues. Residue Ser-162 is modified to Phosphoserine. The segment covering His-164 to Leu-173 has biased composition (basic and acidic residues). Positions Val-177 to Pro-187 are enriched in pro residues. Residues Gly-188–Leu-206 show a composition bias toward acidic residues. Ser-231 is modified (phosphoserine). The segment covering Ala-247–Arg-266 has biased composition (low complexity). Residues Pro-277–Pro-303 are compositionally biased toward polar residues. C2H2-type zinc fingers lie at residues Met-328–His-353, Phe-359–His-383, Tyr-389–His-411, Leu-417–His-439, and Phe-448–His-471. The disordered stretch occupies residues Lys-469–Gln-519. Ser-470 is modified (phosphoserine; by AMPK). Over residues Ser-501–Gln-519 the composition is skewed to polar residues.

It belongs to the krueppel C2H2-type zinc-finger protein family. Phosphorylation at Ser-470 results in loss of DNA-binding activity. In terms of tissue distribution, ubiquitous. Highly expressed in brain, thymus and spleen.

The protein localises to the nucleus. Functionally, may act as an transcriptional repressor for PCK1 gene expression, in turn may participate in the hepatic gluconeogenesis regulation through the activated AMPK signaling pathway. This is Zinc finger protein 692 (ZNF692) from Homo sapiens (Human).